A 326-amino-acid chain; its full sequence is tRNA-modifying protein YgfZ (326 aa).

Residues tryptophan 27 and tryptophan 189 each coordinate folate.

Belongs to the tRNA-modifying YgfZ family.

It is found in the cytoplasm. Its function is as follows. Folate-binding protein involved in regulating the level of ATP-DnaA and in the modification of some tRNAs. It is probably a key factor in regulatory networks that act via tRNA modification, such as initiation of chromosomal replication. This is tRNA-modifying protein YgfZ from Escherichia coli O127:H6 (strain E2348/69 / EPEC).